The primary structure comprises 536 residues: Probable protein S-acyltransferase 23 (536 aa).

The disordered stretch occupies residues 1 to 23 (MDSSEIEVVPLDSNSHQSPTESP). Positions 12–23 (DSNSHQSPTESP) are enriched in polar residues. ANK repeat units follow at residues 57-86 (NGFY…DVNS), 90-119 (IQQT…RIEA), 123-153 (NGFR…DYNA), 157-186 (EGRS…CQNR), 190-219 (TGCT…KEEL), and 225-254 (TGST…TRKN). 2 helical membrane-spanning segments follow: residues 270–290 (YAPM…TSIV) and 298–318 (ITAM…YALI). Positions 363-413 (QLCPTCKIIRPVRSKHCPTCKRCVEQFDHHCPWISNCVGKKNKRYFLVFVI) constitute a DHHC domain. Catalysis depends on cysteine 393, which acts as the S-palmitoyl cysteine intermediate. 2 helical membrane passes run 407-427 (YFLV…TTAV) and 454-474 (AAVF…LTIS).

This sequence belongs to the DHHC palmitoyltransferase family. Expressed in roots, shoots, flowers and pollen.

It localises to the golgi apparatus membrane. The enzyme catalyses L-cysteinyl-[protein] + hexadecanoyl-CoA = S-hexadecanoyl-L-cysteinyl-[protein] + CoA. Palmitoyl acyltransferase. The sequence is that of Probable protein S-acyltransferase 23 (PAT23) from Arabidopsis thaliana (Mouse-ear cress).